Here is a 275-residue protein sequence, read N- to C-terminus: Uronate dehydrogenase (275 aa).

Residues 22–23 (GL), 42–44 (DIA), 60–61 (DL), and 80–84 (FGGVS) contribute to the NAD(+) site. Substrate is bound by residues Ser-84 and 120–122 (SNH). Tyr-145 (proton acceptor) is an active-site residue. Lys-149 contributes to the NAD(+) binding site. Ser-174 contributes to the substrate binding site. Position 175 (Ser-175) interacts with NAD(+). Arg-183 provides a ligand contact to substrate.

Belongs to the NAD(P)-dependent epimerase/dehydratase family. In terms of assembly, homohexamer.

It carries out the reaction beta-D-galacturonate + NAD(+) = D-galactaro-1,5-lactone + NADH + H(+). The enzyme catalyses beta-D-glucuronate + NAD(+) = D-glucaro-1,5-lactone + NADH + H(+). It participates in carbohydrate acid metabolism; D-galacturonate degradation via prokaryotic oxidative pathway. In terms of biological role, catalyzes the oxidation of beta-D-galacturonate and beta-D-glucuronate to galactarate and D-glucarate, respectively. Cannot use NADP(+) instead of NAD(+) as cosubstrate. The protein is Uronate dehydrogenase (udh) of Pseudomonas syringae pv. tomato (strain ATCC BAA-871 / DC3000).